The following is a 90-amino-acid chain: Small ribosomal subunit protein uS15c (90 aa).

Belongs to the universal ribosomal protein uS15 family. In terms of assembly, part of the 30S ribosomal subunit.

The protein resides in the plastid. The protein localises to the chloroplast. The protein is Small ribosomal subunit protein uS15c (rps15) of Morus indica (Mulberry).